An 897-amino-acid chain; its full sequence is Patched domain-containing protein 1 (897 aa).

The helical transmembrane segment at 25 to 45 threads the bilayer; the sequence is PVFFLTVPAVLTIIFGSTVLS. Asn-132, Asn-167, and Asn-179 each carry an N-linked (GlcNAc...) asparagine glycan. Helical transmembrane passes span 271–291 and 306–326; these read GVLAKSEVLVSLVLVLLAATI and GLLGVLTICIANVTAAGIFFI. The SSD domain occupies 273–433; it reads LAKSEVLVSL…FSFYGSCLVF (161 aa). An N-linked (GlcNAc...) asparagine glycan is attached at Asn-332. A run of 4 helical transmembrane segments spans residues 335-355, 377-397, 414-434, and 506-526; these read LLGIPFFAMGHGTKGVFELLA, VMVCYTMTSSLYIITFGMGAS, VAVLVNYFYVFSFYGSCLVFA, and PFVVILYLIYASFSFMGCLQI. 2 N-linked (GlcNAc...) asparagine glycosylation sites follow: Asn-572 and Asn-603. The next 3 membrane-spanning stretches (helical) occupy residues 701–721, 727–747, and 754–774; these read PILTSGFSVLTILILTFFLVI, FWLILTVTSVELGVLGLMTLW, and ISILCLIYTLNFAMDHCAPHL. An N-linked (GlcNAc...) asparagine glycan is attached at Asn-803. Helical transmembrane passes span 806 to 826 and 831 to 851; these read CFVIGIMPLLFVPSNLTYTLF and LTAGCTVLHCFVILPVFLTFF. Residues 856-866 show a composition bias toward basic residues; that stretch reads KRHKKKKRAKR. The interval 856-881 is disordered; sequence KRHKKKKRAKRKEREREREREREREE. Residues 867 to 881 show a composition bias toward basic and acidic residues; the sequence is KEREREREREREREE.

This sequence belongs to the patched family.

The protein localises to the cell membrane. It localises to the cell projection. It is found in the dendritic spine. In terms of biological role, can bind cholesterol in vitro. In Danio rerio (Zebrafish), this protein is Patched domain-containing protein 1 (ptchd1).